The sequence spans 166 residues: Lithostathine-1-beta (166 aa).

Residues M1–G22 form the signal peptide. A glycan (O-linked (GalNAc...) threonine) is linked at T27. The 131-residue stretch at I34–F164 folds into the C-type lectin domain. 3 disulfide bridges follow: C36–C47, C64–C162, and C137–C154.

In terms of processing, all O-linked glycans consist of Gal-GlcNAc-Gal-GalNAc tetrasaccharide core and get elongated (microheterogeneity).

The protein resides in the secreted. Its function is as follows. Might act as an inhibitor of spontaneous calcium carbonate precipitation. May be associated with neuronal sprouting in brain, and with brain and pancreas regeneration. The protein is Lithostathine-1-beta (REG1B) of Homo sapiens (Human).